We begin with the raw amino-acid sequence, 284 residues long: Acetyl-coenzyme A carboxylase carboxyl transferase subunit beta (284 aa).

The CoA carboxyltransferase N-terminal domain maps to 27 to 284 (LMTKCPSCKY…ELHDGGVRHV (258 aa)). Zn(2+) contacts are provided by C31, C34, C50, and C52. The C4-type zinc-finger motif lies at 31-52 (CPSCKYMHYTKQLNENHKVCDC).

It belongs to the AccD/PCCB family. In terms of assembly, acetyl-CoA carboxylase is a heterohexamer composed of biotin carboxyl carrier protein (AccB), biotin carboxylase (AccC) and two subunits each of ACCase subunit alpha (AccA) and ACCase subunit beta (AccD). The cofactor is Zn(2+).

The protein resides in the cytoplasm. It catalyses the reaction N(6)-carboxybiotinyl-L-lysyl-[protein] + acetyl-CoA = N(6)-biotinyl-L-lysyl-[protein] + malonyl-CoA. It participates in lipid metabolism; malonyl-CoA biosynthesis; malonyl-CoA from acetyl-CoA: step 1/1. Its function is as follows. Component of the acetyl coenzyme A carboxylase (ACC) complex. Biotin carboxylase (BC) catalyzes the carboxylation of biotin on its carrier protein (BCCP) and then the CO(2) group is transferred by the transcarboxylase to acetyl-CoA to form malonyl-CoA. This Exiguobacterium sp. (strain ATCC BAA-1283 / AT1b) protein is Acetyl-coenzyme A carboxylase carboxyl transferase subunit beta.